Consider the following 86-residue polypeptide: uncharacterized protein (86 aa).

This is an uncharacterized protein from Saccharomyces cerevisiae (strain ATCC 204508 / S288c) (Baker's yeast).